A 302-amino-acid polypeptide reads, in one-letter code: Ribosomal RNA small subunit methyltransferase H (302 aa).

S-adenosyl-L-methionine is bound by residues G36–H38, D56, F84, D99, and Q106.

Belongs to the methyltransferase superfamily. RsmH family.

It is found in the cytoplasm. The catalysed reaction is cytidine(1402) in 16S rRNA + S-adenosyl-L-methionine = N(4)-methylcytidine(1402) in 16S rRNA + S-adenosyl-L-homocysteine + H(+). Specifically methylates the N4 position of cytidine in position 1402 (C1402) of 16S rRNA. This chain is Ribosomal RNA small subunit methyltransferase H, found in Christiangramia forsetii (strain DSM 17595 / CGMCC 1.15422 / KT0803) (Gramella forsetii).